A 352-amino-acid polypeptide reads, in one-letter code: D-arabitol-phosphate dehydrogenase (352 aa).

Residues Cys-43, His-65, Cys-96, Cys-99, Cys-102, Cys-110, and Glu-151 each contribute to the Mn(2+) site.

It belongs to the zinc-containing alcohol dehydrogenase family. In terms of assembly, homotetramer. Requires Mn(2+) as cofactor.

It catalyses the reaction D-arabinitol 1-phosphate + NAD(+) = D-xylulose 5-phosphate + NADH + H(+). Its activity is regulated as follows. Inhibited by EDTA, 4-hydroxymercuribenzoic acid (PHMB), mercury and zinc ions at a concentration of 2 mM. Functionally, involved in the arabitol catabolism via the arabitol phosphate route. Catalyzes only the transformation of D-arabitol 1-phosphate (Arb1P) and D-arabitol 5-phosphate (Arb5P) into D-xylulose 5-phosphate (Xlu5P) and ribulose 5-phosphate, respectively. It can use both NAD and NADP. In Enterococcus avium (Streptococcus avium), this protein is D-arabitol-phosphate dehydrogenase.